Consider the following 443-residue polypeptide: Serine/threonine-protein phosphatase 2A 55 kDa regulatory subunit B beta isoform (443 aa).

7 WD repeats span residues 22-61, 87-128, 171-209, 220-260, 279-317, 334-375, and 410-443; these read TEAD…KSQP, EIEE…KRPE, AHTY…RSFN, ELTE…LCDN, EIIS…KPLE, ENDC…DVTL, and DFSK…DKVN.

This sequence belongs to the phosphatase 2A regulatory subunit B family. PP2A consists of a common heterodimeric core enzyme, composed of a 36 kDa catalytic subunit (subunit C) and a 65 kDa constant regulatory subunit (PR65 or subunit A), that associates with a variety of regulatory subunits.

The protein localises to the cytoplasm. It localises to the cytoskeleton. It is found in the membrane. Functionally, the B regulatory subunit might modulate substrate selectivity and catalytic activity, and might also direct the localization of the catalytic enzyme to a particular subcellular compartment. This is Serine/threonine-protein phosphatase 2A 55 kDa regulatory subunit B beta isoform (ppp2r2b) from Carassius auratus (Goldfish).